The chain runs to 116 residues: Vesicle-associated membrane protein 5 (116 aa).

Residues 1-72 are Cytoplasmic-facing; sequence MAGIELERCQ…CWENIRYRIC (72 aa). One can recognise a v-SNARE coiled-coil homology domain in the interval 5–65; sequence ELERCQQQAN…QNLAQKKCWE (61 aa). 3 positions are modified to phosphoserine: Ser-41, Ser-48, and Ser-49. The chain crosses the membrane as a helical; Anchor for type IV membrane protein span at residues 73–93; it reads VGLVVVGVLLIILIVLLVVFL. Residues 94–116 lie on the Vesicular side of the membrane; sequence PQSSDSSSAPRTQDAGIASGPGN. The segment at 96 to 116 is disordered; it reads SSDSSSAPRTQDAGIASGPGN.

It belongs to the synaptobrevin family. In terms of processing, (Microbial infection) Targeted and hydrolyzed by C.botulinum neurotoxin type X (BoNT/X) which hydrolyzes the 40-Arg-|-Ser-41 bond and probably inhibits neurotransmitter release. It remains unknown whether BoNT/X is ever produced, or what organisms it targets.

It is found in the cell membrane. Its subcellular location is the endomembrane system. The protein resides in the golgi apparatus. It localises to the trans-Golgi network membrane. May participate in trafficking events that are associated with myogenesis, such as myoblast fusion and/or GLUT4 trafficking. The chain is Vesicle-associated membrane protein 5 (VAMP5) from Homo sapiens (Human).